Here is a 217-residue protein sequence, read N- to C-terminus: MFVTFEGIEGAGKSTAIDYLSDYLQARGHDPVLTREPGGSALGRRLRALLLDVRTGGLASRAELFLFLADRAQHVTEVIRPALEAGQVVLCDRFTDSTLAYQGYGRGLDTEYLRSLNTAATGGLEPDLTLLLDLPVRCGLERAGERNRSAGMVIAEGRFDSESLDFHERVRRGYRALAEEEPERFAIIDASQPPEDVVLQCRSAIEAYLRRRGRGLD.

ATP is bound at residue 7-14 (GIEGAGKS).

This sequence belongs to the thymidylate kinase family.

It carries out the reaction dTMP + ATP = dTDP + ADP. Its function is as follows. Phosphorylation of dTMP to form dTDP in both de novo and salvage pathways of dTTP synthesis. The chain is Thymidylate kinase from Desulfovibrio desulfuricans (strain ATCC 27774 / DSM 6949 / MB).